A 170-amino-acid chain; its full sequence is Myosin regulatory light chain 2, skeletal muscle isoform type 1 (170 aa).

Alanine 2 bears the N,N,N-trimethylalanine mark. A phosphoserine mark is found at serine 16 and serine 17. Residues threonine 26 and threonine 36 each carry the phosphothreonine modification. The region spanning threonine 26–leucine 61 is the EF-hand 1 domain. Ca(2+)-binding residues include aspartate 39, asparagine 41, aspartate 43, and aspartate 50. The residue at position 76 (serine 76) is a Phosphoserine. EF-hand domains follow at residues aspartate 96–arginine 131 and phenylalanine 132–lysine 167. A Phosphothreonine modification is found at threonine 102.

As to quaternary structure, myosin is a hexamer of 2 heavy chains and 4 light chains.

The polypeptide is Myosin regulatory light chain 2, skeletal muscle isoform type 1 (Oryctolagus cuniculus (Rabbit)).